A 91-amino-acid chain; its full sequence is DNA-directed RNA polymerase subunit omega (91 aa).

It belongs to the RNA polymerase subunit omega family. As to quaternary structure, the RNAP catalytic core consists of 2 alpha, 1 beta, 1 beta' and 1 omega subunit. When a sigma factor is associated with the core the holoenzyme is formed, which can initiate transcription.

The catalysed reaction is RNA(n) + a ribonucleoside 5'-triphosphate = RNA(n+1) + diphosphate. In terms of biological role, promotes RNA polymerase assembly. Latches the N- and C-terminal regions of the beta' subunit thereby facilitating its interaction with the beta and alpha subunits. In Psychromonas ingrahamii (strain DSM 17664 / CCUG 51855 / 37), this protein is DNA-directed RNA polymerase subunit omega.